Consider the following 388-residue polypeptide: Probable Na(+)/H(+) antiporter 3 (388 aa).

12 helical membrane-spanning segments follow: residues 2-22 (ESYY…PNLL), 27-47 (IPAI…GLNI), 53-73 (TLKI…GLEV), 81-101 (EFKN…VGGY), 102-122 (LIGQ…VIFA), 146-166 (IILS…SVVI), 175-195 (VGTF…AIPS), 215-235 (VLFI…HPIV), 263-283 (AIGY…ETNI), 294-314 (LLLI…FIAL), 325-345 (TIGG…ASIG), and 354-374 (EIFV…PIVV).

It belongs to the monovalent cation:proton antiporter 1 (CPA1) transporter (TC 2.A.36) family.

The protein resides in the cell membrane. This is probably a Na(+)/H(+) antiporter. This Methanocaldococcus jannaschii (strain ATCC 43067 / DSM 2661 / JAL-1 / JCM 10045 / NBRC 100440) (Methanococcus jannaschii) protein is Probable Na(+)/H(+) antiporter 3.